We begin with the raw amino-acid sequence, 398 residues long: UPF0229 protein Ccel_0490 (398 aa).

2 disordered regions span residues 1-22 (MAIF…RRRH) and 68-104 (KSKP…NSEG). Composition is skewed to basic and acidic residues over residues 11–22 (GKDRSAEDRRRH) and 78–95 (GNEK…EGKG).

This sequence belongs to the UPF0229 family.

This chain is UPF0229 protein Ccel_0490, found in Ruminiclostridium cellulolyticum (strain ATCC 35319 / DSM 5812 / JCM 6584 / H10) (Clostridium cellulolyticum).